The primary structure comprises 596 residues: Elongation factor 4 (596 aa).

The 183-residue stretch at 2 to 184 folds into the tr-type G domain; sequence KHIRNFSIIA…VIVEQIPPPE (183 aa). GTP-binding positions include 14 to 19 and 131 to 134; these read DHGKST and NKID.

Belongs to the TRAFAC class translation factor GTPase superfamily. Classic translation factor GTPase family. LepA subfamily.

Its subcellular location is the cell inner membrane. It catalyses the reaction GTP + H2O = GDP + phosphate + H(+). Functionally, required for accurate and efficient protein synthesis under certain stress conditions. May act as a fidelity factor of the translation reaction, by catalyzing a one-codon backward translocation of tRNAs on improperly translocated ribosomes. Back-translocation proceeds from a post-translocation (POST) complex to a pre-translocation (PRE) complex, thus giving elongation factor G a second chance to translocate the tRNAs correctly. Binds to ribosomes in a GTP-dependent manner. This is Elongation factor 4 from Shewanella oneidensis (strain ATCC 700550 / JCM 31522 / CIP 106686 / LMG 19005 / NCIMB 14063 / MR-1).